The primary structure comprises 245 residues: DNA polymerase sliding clamp (245 aa).

The protein belongs to the PCNA family. As to quaternary structure, homotrimer. The subunits circularize to form a toroid; DNA passes through its center. Replication factor C (RFC) is required to load the toroid on the DNA.

Functionally, sliding clamp subunit that acts as a moving platform for DNA processing. Responsible for tethering the catalytic subunit of DNA polymerase and other proteins to DNA during high-speed replication. The chain is DNA polymerase sliding clamp from Picrophilus torridus (strain ATCC 700027 / DSM 9790 / JCM 10055 / NBRC 100828 / KAW 2/3).